The following is a 463-amino-acid chain: MSTGTVVQVIGAVVDVEFPQDAVPQVYDALKITGEGSCNGLVLEVQQQLGGGVVRTIAMGTSDGLRRGLEVVNSGSPISVPVGTATLGRIMNVLGDPIDEAGAIGEEERYVIHRSAPSYEEQSNTTELLETGIKVIDLVCPFAKGGKVGLFGGAGVGKTVNMMELINNIAKAHSGLSVFAGVGERTREGNDFYYEMKDSGVLDKVAMVYGQMNEPPGNRLRVALTGLTMAEKFRDEGRDVLLFVDNIYRYTLAGTEVSALLGRMPSAVGYQPTLAEEMGVLQERITSTKTGSITSVQAVYVPADDLTDPSPATTFAHLDATVVLSRQIASLGIYPAVDPLDSTSRQLDPLVVGQEHYDVANGVQTVLQRYKELKDIIAILGMDELSDEDKMTVSRARKIERFLSQPFHVAEVFTGSPGKYVSLKDTIRGFKGILSGEFDHIPEQAFYMVGSIDEAVEKANKKK.

Residue 152–159 (GGAGVGKT) participates in ATP binding.

The protein belongs to the ATPase alpha/beta chains family. F-type ATPases have 2 components, CF(1) - the catalytic core - and CF(0) - the membrane proton channel. CF(1) has five subunits: alpha(3), beta(3), gamma(1), delta(1), epsilon(1). CF(0) has three main subunits: a(1), b(2) and c(9-12). The alpha and beta chains form an alternating ring which encloses part of the gamma chain. CF(1) is attached to CF(0) by a central stalk formed by the gamma and epsilon chains, while a peripheral stalk is formed by the delta and b chains.

It is found in the cell inner membrane. It carries out the reaction ATP + H2O + 4 H(+)(in) = ADP + phosphate + 5 H(+)(out). Its function is as follows. Produces ATP from ADP in the presence of a proton gradient across the membrane. The catalytic sites are hosted primarily by the beta subunits. The polypeptide is ATP synthase subunit beta (Shewanella sp. (strain ANA-3)).